The following is a 332-amino-acid chain: Ectoine dioxygenase (332 aa).

The segment covering 1 to 10 (MSVQTSSNRP) has biased composition (polar residues). The disordered stretch occupies residues 1-47 (MSVQTSSNRPLPQANLHIATETPEADSRIRSAPRPGQDPYPTRLSEP). Gln163 serves as a coordination point for L-ectoine. Position 169 (Lys169) interacts with 2-oxoglutarate. 3 residues coordinate Fe cation: His180, Asp182, and His281.

Belongs to the PhyH family. EctD subfamily. As to quaternary structure, homodimer. It depends on Fe(2+) as a cofactor.

The catalysed reaction is L-ectoine + 2-oxoglutarate + O2 = 5-hydroxyectoine + succinate + CO2. Its function is as follows. Involved in the biosynthesis of 5-hydroxyectoine, called compatible solute, which helps organisms to survive extreme osmotic stress by acting as a highly soluble organic osmolyte. Catalyzes the 2-oxoglutarate-dependent selective hydroxylation of L-ectoine to yield (4S,5S)-5-hydroxyectoine. This Halomonas elongata (strain ATCC 33173 / DSM 2581 / NBRC 15536 / NCIMB 2198 / 1H9) protein is Ectoine dioxygenase.